Here is a 92-residue protein sequence, read N- to C-terminus: PqqA binding protein (92 aa).

The protein belongs to the PqqD family. Monomer. Interacts with PqqE.

It participates in cofactor biosynthesis; pyrroloquinoline quinone biosynthesis. Functionally, functions as a PqqA binding protein and presents PqqA to PqqE, in the pyrroloquinoline quinone (PQQ) biosynthetic pathway. The chain is PqqA binding protein from Xanthomonas campestris pv. campestris (strain B100).